The chain runs to 133 residues: Small ribosomal subunit protein uS8 (133 aa).

Belongs to the universal ribosomal protein uS8 family. Part of the 30S ribosomal subunit. Contacts proteins S5 and S12.

Its function is as follows. One of the primary rRNA binding proteins, it binds directly to 16S rRNA central domain where it helps coordinate assembly of the platform of the 30S subunit. In Parasynechococcus marenigrum (strain WH8102), this protein is Small ribosomal subunit protein uS8.